We begin with the raw amino-acid sequence, 244 residues long: MNKGKFALLFTFAACFAVIVFFWLLAVPPENFTADRIVMVLLISPIFAILLAFNLSRFLKQHGYSLRQVHVALEQNIADFIYEFQRLVFIHLMPIAFLGALIFYYGEFTPAIAEFLSLFALIFALSPLLFLGISFFVAMLQVYERVRKKSLLRANFFNFWIWIHLFVILLIIISKVLVQPSELPFQKAYFKALNDGVFNLLIIATMNAIFGVTGRMVAREKFPILLHLSIPLVNSFVAVKILMA.

Transmembrane regions (helical) follow at residues 5 to 27, 37 to 59, 87 to 106, 116 to 138, 159 to 181, and 196 to 218; these read KFALLFTFAACFAVIVFFWLLAV, IVMVLLISPIFAILLAFNLSRFL, LVFIHLMPIAFLGALIFYYG, LSLFALIFALSPLLFLGISFFVA, FWIWIHLFVILLIIISKVLVQPS, and GVFNLLIIATMNAIFGVTGRMVA.

It localises to the cell membrane. This is an uncharacterized protein from Archaeoglobus fulgidus (strain ATCC 49558 / DSM 4304 / JCM 9628 / NBRC 100126 / VC-16).